The following is a 72-amino-acid chain: ATP synthase subunit L (72 aa).

In terms of assembly, F-type ATP synthases have 2 components, the catalytic core F(1) and the membrane-embedded component F(0), linked together by a central stalk and a peripheral stalk. The central stalk, also called rotor shaft, is often seen as part of F(1). The peripheral stalk is seen as part of F(0). F(0) contains the membrane channel next to the rotor. F-type ATP synthases form dimers but each monomer functions independently in ATP generation. The dimer consists of 18 different polypeptides: ATP1 (subunit alpha, part of F(1), 3 molecules per monomer), ATP2 (subunit beta, part of F(1), 3 molecules per monomer), ATP3 (subunit gamma, part of the central stalk), ATP4 (subunit b, part of the peripheral stalk), ATP5/OSCP (subunit 5/OSCP, part of the peripheral stalk), ATP6 (subunit a, part of the peripheral stalk), ATP7 (subunit d, part of the peripheral stalk), ATP8 (subunit 8, part of the peripheral stalk), OLI1 (subunit c, part of the rotor, 10 molecules per monomer), ATP14 (subunit h, part of the peripheral stalk), ATP15 (subunit epsilon, part of the central stalk), ATP16 (subunit delta, part of the central stalk), ATP17 (subunit f, part of the peripheral stalk), ATP18 (subunit i/j, part of the peripheral stalk). Dimer-specific subunits are ATP19 (subunit k, at interface between monomers), ATP20 (subunit g, at interface between monomers), TIM11 (subunit e, at interface between monomers). Also contains subunit L.

The protein resides in the mitochondrion inner membrane. Functionally, mitochondrial membrane ATP synthase (F(1)F(0) ATP synthase or Complex V) produces ATP from ADP in the presence of a proton gradient across the membrane which is generated by electron transport complexes of the respiratory chain. F-type ATP synthases consist of two structural domains, F(1) - containing the extramembraneous catalytic core, and F(0) - containing the membrane proton channel, linked together by a central stalk and a peripheral stalk. During catalysis, ATP synthesis in the catalytic domain of F(1) is coupled via a rotary mechanism of the central stalk subunits to proton translocation. This chain is ATP synthase subunit L, found in Pichia angusta (Yeast).